Reading from the N-terminus, the 276-residue chain is 4-chlorobenzoyl coenzyme A dehalogenase-2 (276 aa).

66 to 71 (AGFDLE) is a substrate binding site. Histidine 93 functions as the Proton acceptor in the catalytic mechanism. Substrate is bound at residue glycine 117. Catalysis depends on aspartate 148, which acts as the Nucleophile. Substrate is bound at residue arginine 261.

Belongs to the enoyl-CoA hydratase/isomerase family. Homotetramer.

It catalyses the reaction 4-chlorobenzoyl-CoA + H2O = 4-hydroxybenzoyl-CoA + chloride + H(+). Its pathway is xenobiotic degradation; 4-chlorobenzoate degradation; 4-hydroxybenzoate from 4-chlorobenzoate: step 2/3. Functionally, dehalogenates 4-chlorobenzoyl-CoA, 4-iodobenzoyl-CoA, 4-bromobenzoyl-CoA and, at a slower rate, 4-fluorobenzoyl-CoA. Does not dehalogenate 2-chlorobenzoyl-CoA or 3-chlorobenzoyl-CoA. This Arthrobacter sp protein is 4-chlorobenzoyl coenzyme A dehalogenase-2.